We begin with the raw amino-acid sequence, 212 residues long: Pyrrolidone-carboxylate peptidase (212 aa).

Active-site residues include glutamate 80, cysteine 143, and histidine 165.

It belongs to the peptidase C15 family. As to quaternary structure, homotetramer.

The protein resides in the cytoplasm. The enzyme catalyses Release of an N-terminal pyroglutamyl group from a polypeptide, the second amino acid generally not being Pro.. Functionally, removes 5-oxoproline from various penultimate amino acid residues except L-proline. The sequence is that of Pyrrolidone-carboxylate peptidase from Vibrio parahaemolyticus serotype O3:K6 (strain RIMD 2210633).